We begin with the raw amino-acid sequence, 202 residues long: Small ribosomal subunit protein uS4 (202 aa).

The segment at 15-43 (LGDLPGLTRKAAKRSNPPGQHGNARRKRS) is disordered. Positions 90 to 152 (GRLDNVCFRL…KGSKKLAEGN (63 aa)) constitute an S4 RNA-binding domain.

The protein belongs to the universal ribosomal protein uS4 family. Part of the 30S ribosomal subunit. Contacts protein S5. The interaction surface between S4 and S5 is involved in control of translational fidelity.

One of the primary rRNA binding proteins, it binds directly to 16S rRNA where it nucleates assembly of the body of the 30S subunit. Its function is as follows. With S5 and S12 plays an important role in translational accuracy. This is Small ribosomal subunit protein uS4 from Prochlorococcus marinus (strain SARG / CCMP1375 / SS120).